Reading from the N-terminus, the 66-residue chain is Large ribosomal subunit protein bL33c (66 aa).

Belongs to the bacterial ribosomal protein bL33 family.

It is found in the plastid. It localises to the chloroplast. The sequence is that of Large ribosomal subunit protein bL33c from Lotus japonicus (Lotus corniculatus var. japonicus).